The chain runs to 505 residues: ATP synthase subunit beta (505 aa).

Residues 1–25 are disordered; the sequence is MAKAATPKETAAVKKPAAPKKAATA. An ATP-binding site is contributed by 183 to 190; that stretch reads GGAGVGKT.

The protein belongs to the ATPase alpha/beta chains family. As to quaternary structure, F-type ATPases have 2 components, CF(1) - the catalytic core - and CF(0) - the membrane proton channel. CF(1) has five subunits: alpha(3), beta(3), gamma(1), delta(1), epsilon(1). CF(0) has three main subunits: a(1), b(2) and c(9-12). The alpha and beta chains form an alternating ring which encloses part of the gamma chain. CF(1) is attached to CF(0) by a central stalk formed by the gamma and epsilon chains, while a peripheral stalk is formed by the delta and b chains.

The protein resides in the cell inner membrane. The catalysed reaction is ATP + H2O + 4 H(+)(in) = ADP + phosphate + 5 H(+)(out). In terms of biological role, produces ATP from ADP in the presence of a proton gradient across the membrane. The catalytic sites are hosted primarily by the beta subunits. The sequence is that of ATP synthase subunit beta from Sinorhizobium fredii (strain NBRC 101917 / NGR234).